The sequence spans 583 residues: Aspartate--tRNA ligase (583 aa).

Position 174 (Glu-174) interacts with L-aspartate. The aspartate stretch occupies residues 198–201; it reads QITK. Position 220 (Arg-220) interacts with L-aspartate. ATP contacts are provided by residues 220–222 and Gln-229; that span reads RDE. His-443 provides a ligand contact to L-aspartate. Glu-477 serves as a coordination point for ATP. L-aspartate is bound at residue Arg-484. Residue 529–532 coordinates ATP; the sequence is GLDR.

The protein belongs to the class-II aminoacyl-tRNA synthetase family. Type 1 subfamily. As to quaternary structure, homodimer.

The protein resides in the cytoplasm. It carries out the reaction tRNA(Asp) + L-aspartate + ATP = L-aspartyl-tRNA(Asp) + AMP + diphosphate. In terms of biological role, catalyzes the attachment of L-aspartate to tRNA(Asp) in a two-step reaction: L-aspartate is first activated by ATP to form Asp-AMP and then transferred to the acceptor end of tRNA(Asp). The polypeptide is Aspartate--tRNA ligase (Streptococcus thermophilus (strain CNRZ 1066)).